Reading from the N-terminus, the 196-residue chain is Probable thymidylate kinase (196 aa).

7-14 is a binding site for ATP; the sequence is GIDGSGKS.

The protein belongs to the thymidylate kinase family.

It carries out the reaction dTMP + ATP = dTDP + ADP. The polypeptide is Probable thymidylate kinase (Natronomonas pharaonis (strain ATCC 35678 / DSM 2160 / CIP 103997 / JCM 8858 / NBRC 14720 / NCIMB 2260 / Gabara) (Halobacterium pharaonis)).